The chain runs to 430 residues: Multisubstrate adapter protein soc-1 (430 aa).

Residues 7–133 (NIILEGSLKR…WVNEICKLCK (127 aa)) enclose the PH domain. Residues 192–222 (SHNSLPSNPNYNNLPDPLESSRSETSSMYSS) are compositionally biased toward low complexity. 3 disordered regions span residues 192 to 246 (SHNS…TRHT), 275 to 303 (EDAE…SEGF), and 315 to 377 (RRAP…RNLD). Positions 341–369 (RNLSRNGVNENGNYSATFSSRTSNYQQSE) are enriched in polar residues.

In terms of assembly, interacts (via C-terminus) with sem-5 (probably via SH3 domain 2). Interacts with nicotinic acetylcholine receptor. May be phosphorylated.

In terms of biological role, adapter protein which modulates signaling mediated by several receptor tyrosine kinases. Plays a role in fluid homeostasis, probably downstream of receptor egl-15 and upstream of let-60/Ras. Involved in nicotinic acetylcholine receptor (nAChR)-mediated sensitivity to nicotine and levamisole and gamma-aminobutyric acid (GABA)receptor-mediated sensitivity to muscimol. Regulates synaptic levels of nAchR receptor subunit lev-1 and unc-38, and GABA receptor subunit unc-49 in the nerve cord, probably downstream of egl-15. Regulates motility. During the formation of neuromuscular junctions at the larval stage, down-regulates membrane protrusion from body wall muscles, probably downstream of egl-15. Promotes vulva induction and down-regulates fertility, probably downstream of receptor let-23. Down-regulates daf-2-mediated repression of dauer formation and positively regulates daf-2-mediated aging. May be involved in the recruitment of phosphatase ptp-2 to egl-15. This chain is Multisubstrate adapter protein soc-1, found in Caenorhabditis elegans.